The chain runs to 424 residues: Protein-glutamate methylesterase/protein-glutamine glutaminase (424 aa).

In terms of domain architecture, Response regulatory spans 6-123 (RVLVVDDSAF…SLDDFTRQLT (118 aa)). Residue Asp-57 is modified to 4-aspartylphosphate. The segment at 177 to 210 (SRLSPGRSPGGKEGVAGAVSAGSTRGEAIRPGKG) is disordered. In terms of domain architecture, CheB-type methylesterase spans 229–423 (RRPGIEVVAI…PAIVALVTGA (195 aa)). Active-site residues include Ser-241, His-268, and Asp-365.

The protein belongs to the CheB family. In terms of processing, phosphorylated by CheA. Phosphorylation of the N-terminal regulatory domain activates the methylesterase activity.

Its subcellular location is the cytoplasm. It catalyses the reaction [protein]-L-glutamate 5-O-methyl ester + H2O = L-glutamyl-[protein] + methanol + H(+). The enzyme catalyses L-glutaminyl-[protein] + H2O = L-glutamyl-[protein] + NH4(+). In terms of biological role, involved in chemotaxis. Part of a chemotaxis signal transduction system that modulates chemotaxis in response to various stimuli. Catalyzes the demethylation of specific methylglutamate residues introduced into the chemoreceptors (methyl-accepting chemotaxis proteins or MCP) by CheR. Also mediates the irreversible deamidation of specific glutamine residues to glutamic acid. This is Protein-glutamate methylesterase/protein-glutamine glutaminase from Moorella thermoacetica (strain ATCC 39073 / JCM 9320).